A 156-amino-acid polypeptide reads, in one-letter code: ATP synthase subunit b (156 aa).

A helical transmembrane segment spans residues 7-27; that stretch reads FFAQMVVFFILWWVVAKFIWP.

It belongs to the ATPase B chain family. F-type ATPases have 2 components, F(1) - the catalytic core - and F(0) - the membrane proton channel. F(1) has five subunits: alpha(3), beta(3), gamma(1), delta(1), epsilon(1). F(0) has three main subunits: a(1), b(2) and c(10-14). The alpha and beta chains form an alternating ring which encloses part of the gamma chain. F(1) is attached to F(0) by a central stalk formed by the gamma and epsilon chains, while a peripheral stalk is formed by the delta and b chains.

The protein resides in the cell inner membrane. F(1)F(0) ATP synthase produces ATP from ADP in the presence of a proton or sodium gradient. F-type ATPases consist of two structural domains, F(1) containing the extramembraneous catalytic core and F(0) containing the membrane proton channel, linked together by a central stalk and a peripheral stalk. During catalysis, ATP synthesis in the catalytic domain of F(1) is coupled via a rotary mechanism of the central stalk subunits to proton translocation. Functionally, component of the F(0) channel, it forms part of the peripheral stalk, linking F(1) to F(0). This is ATP synthase subunit b from Cupriavidus metallidurans (strain ATCC 43123 / DSM 2839 / NBRC 102507 / CH34) (Ralstonia metallidurans).